Here is a 300-residue protein sequence, read N- to C-terminus: uncharacterized protein (300 aa).

Helical transmembrane passes span 13–35 (LLCI…LQPL), 45–67 (MLTM…SLLS), 80–102 (WVLF…WAPL), 106–128 (GINI…WAWL), 180–202 (IPAL…IYIL), 217–236 (YWLL…SANL), 243–265 (PVSI…AVFV), and 275–294 (YFTY…EGLL).

This sequence belongs to the EamA transporter family.

The protein resides in the cell membrane. This is an uncharacterized protein from Haemophilus influenzae (strain ATCC 51907 / DSM 11121 / KW20 / Rd).